The chain runs to 433 residues: 3-phosphoshikimate 1-carboxyvinyltransferase (433 aa).

3-phosphoshikimate contacts are provided by Lys-22, Ser-23, and Arg-27. Position 22 (Lys-22) interacts with phosphoenolpyruvate. Residues Gly-95 and Arg-123 each coordinate phosphoenolpyruvate. 3-phosphoshikimate is bound by residues Ser-166, Gln-168, Asp-314, and Lys-341. Residue Gln-168 participates in phosphoenolpyruvate binding. Catalysis depends on Asp-314, which acts as the Proton acceptor. Phosphoenolpyruvate-binding residues include Arg-345 and Arg-386.

This sequence belongs to the EPSP synthase family. As to quaternary structure, monomer.

It is found in the cytoplasm. It carries out the reaction 3-phosphoshikimate + phosphoenolpyruvate = 5-O-(1-carboxyvinyl)-3-phosphoshikimate + phosphate. It functions in the pathway metabolic intermediate biosynthesis; chorismate biosynthesis; chorismate from D-erythrose 4-phosphate and phosphoenolpyruvate: step 6/7. Its function is as follows. Catalyzes the transfer of the enolpyruvyl moiety of phosphoenolpyruvate (PEP) to the 5-hydroxyl of shikimate-3-phosphate (S3P) to produce enolpyruvyl shikimate-3-phosphate and inorganic phosphate. This Acidithiobacillus ferrooxidans (strain ATCC 23270 / DSM 14882 / CIP 104768 / NCIMB 8455) (Ferrobacillus ferrooxidans (strain ATCC 23270)) protein is 3-phosphoshikimate 1-carboxyvinyltransferase.